The chain runs to 174 residues: MKRSEKAAVIEAIKAKADKASFAVLTDFKGMTVEELTNLRGSLRKAGGEYLVVKNTLARIALTDGTHDVIKDKFRENIGVAFGFDDPVAVAKALSDFAKQSKLFELRCASLDGKALEVAQIDALAKLPGREQLLGHLLGTMNAVPTNFVSLFANVLRGLLYALKGIEEQKSNAA.

It belongs to the universal ribosomal protein uL10 family. Part of the ribosomal stalk of the 50S ribosomal subunit. The N-terminus interacts with L11 and the large rRNA to form the base of the stalk. The C-terminus forms an elongated spine to which L12 dimers bind in a sequential fashion forming a multimeric L10(L12)X complex.

Functionally, forms part of the ribosomal stalk, playing a central role in the interaction of the ribosome with GTP-bound translation factors. In Desulfovibrio desulfuricans (strain ATCC 27774 / DSM 6949 / MB), this protein is Large ribosomal subunit protein uL10.